The chain runs to 259 residues: DNA-directed RNA polymerase 30 kDa polypeptide (259 aa).

Residues 155-195 (YNTPCPNCKSRNTTPMMIQTRAADEPPLVRHACRDCKQHFK) form a TFIIS-type zinc finger. Zn(2+) is bound by residues Cys159, Cys162, Cys187, and Cys190. The tract at residues 220 to 259 (EILPDNNPSPPESPEPASPIDDGLIRATFDRNDEPPEDDE) is disordered. Positions 226–236 (NPSPPESPEPA) are enriched in pro residues.

Belongs to the poxviridae DNA-directed RNA polymerase 30 kDa subunit family. The DNA-dependent RNA polymerase (vRNAP) consists of eight subunits encoded by early viral genes and termed according to their apparent molecular masses Rpo147, Rpo132, Rpo35, Rpo30, Rpo22, Rpo19, Rpo18, and Rpo7. The same holoenzyme, with the addition of the transcription-specificity factor RAP94, is used for early gene expression.

The protein resides in the virion. It is found in the host cytoplasm. It catalyses the reaction RNA(n) + a ribonucleoside 5'-triphosphate = RNA(n+1) + diphosphate. Part of the DNA-dependent RNA polymerase which catalyzes the transcription of viral DNA into RNA using the four ribonucleoside triphosphates as substrates. Responsible for the transcription of early, intermediate and late genes. DNA-dependent RNA polymerase associates with the early transcription factor (ETF), itself composed of OPG118 and OPG134, thereby allowing the early genes transcription. Late transcription, and probably also intermediate transcription, require newly synthesized RNA polymerase. The polypeptide is DNA-directed RNA polymerase 30 kDa polypeptide (OPG066) (Bos taurus (Bovine)).